The sequence spans 115 residues: Large ribosomal subunit protein bL20 (115 aa).

The protein belongs to the bacterial ribosomal protein bL20 family.

Binds directly to 23S ribosomal RNA and is necessary for the in vitro assembly process of the 50S ribosomal subunit. It is not involved in the protein synthesizing functions of that subunit. This is Large ribosomal subunit protein bL20 from Chlorobaculum tepidum (strain ATCC 49652 / DSM 12025 / NBRC 103806 / TLS) (Chlorobium tepidum).